The following is a 226-amino-acid chain: 7-cyano-7-deazaguanine synthase (226 aa).

10-20 (LSGGLDSATAA) serves as a coordination point for ATP. Zn(2+) contacts are provided by C191, C199, C202, and C205.

Belongs to the QueC family. It depends on Zn(2+) as a cofactor.

It carries out the reaction 7-carboxy-7-deazaguanine + NH4(+) + ATP = 7-cyano-7-deazaguanine + ADP + phosphate + H2O + H(+). Its pathway is purine metabolism; 7-cyano-7-deazaguanine biosynthesis. In terms of biological role, catalyzes the ATP-dependent conversion of 7-carboxy-7-deazaguanine (CDG) to 7-cyano-7-deazaguanine (preQ(0)). This is 7-cyano-7-deazaguanine synthase from Synechococcus sp. (strain CC9311).